A 417-amino-acid chain; its full sequence is Zinc finger protein CONSTANS-LIKE 16 (417 aa).

Residues cysteine 17, cysteine 20, cysteine 40, and histidine 45 each coordinate Zn(2+). The B box-type; atypical zinc-finger motif lies at 17 to 59; the sequence is CDSCVKRRARWYCAADDAFLCQSCDSLVHSANPLARRHERVRL. The interval 63-105 is disordered; sequence SPAVVKHSNHSSASPPHEVATWHHGFTRKARTPRGSGKKNNSS. Positions 212–239 form a coiled coil; sequence LSNSEMFKIEKDEIEEEVEEIKAMSMDI. A CCT domain is found at 361–403; the sequence is REARVSRYREKRRTRLFSKKIRYEVRKLNAEKRPRMKGRFVKR.

Belongs to the CONSTANS family.

It localises to the nucleus. The polypeptide is Zinc finger protein CONSTANS-LIKE 16 (COL16) (Arabidopsis thaliana (Mouse-ear cress)).